The following is a 440-amino-acid chain: Elongation factor 1-gamma (440 aa).

At Ala2 the chain carries N-acetylalanine. The region spanning 2 to 87 (AAGTLYTYPE…YVSNEELRGS (86 aa)) is the GST N-terminal domain. One can recognise a GST C-terminal domain in the interval 88-216 (TPEAAAQVVQ…VKLCEKMAQF (129 aa)). Residues Lys147 and Lys212 each carry the N6-acetyllysine modification. Residues 221–257 (FAESQPKKDTPRKEKGSREEKLKPQAERKEGKEEKKA) are compositionally biased toward basic and acidic residues. The disordered stretch occupies residues 221-267 (FAESQPKKDTPRKEKGSREEKLKPQAERKEGKEEKKAAAPAPEEELD). A Glycyl lysine isopeptide (Lys-Gly) (interchain with G-Cter in SUMO1) cross-link involves residue Lys256. The EF-1-gamma C-terminal domain maps to 279 to 440 (AKDPFAHLPK…KAFNQGKIFK (162 aa)). Lys288 participates in a covalent cross-link: Glycyl lysine isopeptide (Lys-Gly) (interchain with G-Cter in SUMO2). Residue Lys404 is modified to N6-acetyllysine. Lys437 is subject to N6-acetyllysine; alternate. Lys437 bears the N6-malonyllysine; alternate mark.

In terms of assembly, EF-1 is composed of four subunits: alpha, beta, delta, and gamma.

Functionally, probably plays a role in anchoring the complex to other cellular components. This is Elongation factor 1-gamma (EEF1G) from Bos taurus (Bovine).